The primary structure comprises 256 residues: MGYLKRFALYISVMILIFAIAGCGKGNETKEDSKEEQIKKSFAKTLDMYPIKNLEDLYDKEGYRDGEFKKGDKGMWTIYTDFAKGNKSDELDDEGMVLNLDRNTRTAKGYYFVKKFYEKDKLPDRKNYKVEMKNNKIILLDKVEDPNLKKRIENFKFFGQYANFKDLENYNNGDVSINWNVPSYDVEYKMSNKDENVKQLRSRYNIPTDKAPMLKMHIDGDLKGSSVGYKRLEIDFSKEGRDISVIDYLSYKPAKK.

The signal sequence occupies residues 1 to 22 (MGYLKRFALYISVMILIFAIAG). Cysteine 23 is lipidated: N-palmitoyl cysteine. Cysteine 23 carries S-diacylglycerol cysteine lipidation.

Belongs to the staphylococcal tandem lipoprotein family.

The protein localises to the cell membrane. This is an uncharacterized protein from Staphylococcus aureus (strain COL).